Reading from the N-terminus, the 729-residue chain is Fatty acid oxidation complex subunit alpha (729 aa).

The interval 1–189 is enoyl-CoA hydratase/isomerase; that stretch reads MLYKGDTLYL…KIGLVDGVVK (189 aa). Asp296 lines the substrate pocket. Positions 311-729 are 3-hydroxyacyl-CoA dehydrogenase; sequence ETPKQAAVLG…ARPVGSLKTA (419 aa). NAD(+) contacts are provided by residues Met324, Asp343, 400 to 402, Lys407, and Ser429; that span reads VVE. Catalysis depends on His450, which acts as the For 3-hydroxyacyl-CoA dehydrogenase activity. NAD(+) is bound at residue Asn453. 2 residues coordinate substrate: Asn500 and Tyr660. The interval 708 to 729 is disordered; it reads RHNEPYYPPVEPARPVGSLKTA.

In the N-terminal section; belongs to the enoyl-CoA hydratase/isomerase family. This sequence in the C-terminal section; belongs to the 3-hydroxyacyl-CoA dehydrogenase family. As to quaternary structure, heterotetramer of two alpha chains (FadB) and two beta chains (FadA).

The enzyme catalyses a (3S)-3-hydroxyacyl-CoA + NAD(+) = a 3-oxoacyl-CoA + NADH + H(+). The catalysed reaction is a (3S)-3-hydroxyacyl-CoA = a (2E)-enoyl-CoA + H2O. It carries out the reaction a 4-saturated-(3S)-3-hydroxyacyl-CoA = a (3E)-enoyl-CoA + H2O. It catalyses the reaction (3S)-3-hydroxybutanoyl-CoA = (3R)-3-hydroxybutanoyl-CoA. The enzyme catalyses a (3Z)-enoyl-CoA = a 4-saturated (2E)-enoyl-CoA. The catalysed reaction is a (3E)-enoyl-CoA = a 4-saturated (2E)-enoyl-CoA. It participates in lipid metabolism; fatty acid beta-oxidation. In terms of biological role, involved in the aerobic and anaerobic degradation of long-chain fatty acids via beta-oxidation cycle. Catalyzes the formation of 3-oxoacyl-CoA from enoyl-CoA via L-3-hydroxyacyl-CoA. It can also use D-3-hydroxyacyl-CoA and cis-3-enoyl-CoA as substrate. In Salmonella schwarzengrund (strain CVM19633), this protein is Fatty acid oxidation complex subunit alpha.